A 1563-amino-acid chain; its full sequence is Ribulose bisphosphate carboxylase (1563 aa).

Residues histidine 32 and serine 79 each contribute to the substrate site. Positions 197-217 are cleaved as a propeptide — linker; it reads LAAAFVGASTTRKASSVARRA. Asparagine 328 contributes to the substrate binding site. The active-site Proton acceptor is lysine 383. Residue lysine 385 participates in substrate binding. Positions 408, 410, and 411 each coordinate Mg(2+). Lysine 408 carries the N6-carboxylysine modification. Histidine 504 (proton acceptor) is an active-site residue. Residues arginine 505, histidine 538, and serine 585 each coordinate substrate. Positions 703–723 are cleaved as a propeptide — linker; sequence LAAAFVGASTTRKASSVARRA. Asparagine 834 lines the substrate pocket. Catalysis depends on lysine 889, which acts as the Proton acceptor. A substrate-binding site is contributed by lysine 891. Residues lysine 914, aspartate 916, and glutamate 917 each coordinate Mg(2+). Lysine 914 is modified (N6-carboxylysine). Histidine 1010 (proton acceptor) is an active-site residue. 3 residues coordinate substrate: arginine 1011, histidine 1044, and serine 1091. A propeptide spans 1209–1229 (linker); that stretch reads LAAAFVGASTTRKASSVARRA. Asparagine 1340 provides a ligand contact to substrate. Lysine 1395 serves as the catalytic Proton acceptor. Lysine 1397 contributes to the substrate binding site. Lysine 1420, aspartate 1422, and glutamate 1423 together coordinate Mg(2+). Lysine 1420 is subject to N6-carboxylysine. Residue histidine 1516 is the Proton acceptor of the active site. Arginine 1517 and histidine 1550 together coordinate substrate.

Belongs to the RuBisCO large chain family. Type II subfamily. Homodimer. It depends on Mg(2+) as a cofactor. Post-translationally, in Western blots an approximately 220 kDa polyprotein and 2 smaller proteins of about 55 and 52 kDa are detected, suggesting the polyprotein may be cleaved at one end of the linker and then at the other end to give mature RuBisCO.

The protein resides in the plastid. Its subcellular location is the chloroplast. It carries out the reaction 2 (2R)-3-phosphoglycerate + 2 H(+) = D-ribulose 1,5-bisphosphate + CO2 + H2O. The catalysed reaction is D-ribulose 1,5-bisphosphate + O2 = 2-phosphoglycolate + (2R)-3-phosphoglycerate + 2 H(+). In terms of biological role, ruBisCO catalyzes two reactions: the carboxylation of D-ribulose 1,5-bisphosphate, the primary event in carbon dioxide fixation, as well as the oxidative fragmentation of the pentose substrate. Both reactions occur simultaneously and in competition at the same active site. This is Ribulose bisphosphate carboxylase (rbcL) from Prorocentrum minimum (Dinoflagellate).